Reading from the N-terminus, the 230-residue chain is V-type proton ATPase subunit E (230 aa).

The protein belongs to the V-ATPase E subunit family. As to quaternary structure, V-ATPase is a heteromultimeric enzyme composed of a peripheral catalytic V1 complex (components A to H) attached to an integral membrane V0 proton pore complex (components: a, c, c', c'' and d).

In terms of biological role, subunit of the peripheral V1 complex of vacuolar ATPase essential for assembly or catalytic function. V-ATPase is responsible for acidifying a variety of intracellular compartments in eukaryotic cells. This chain is V-type proton ATPase subunit E (VATE), found in Citrus unshiu (Satsuma mandarin).